A 147-amino-acid polypeptide reads, in one-letter code: ATP synthase subunit 9, mitochondrial (147 aa).

The transit peptide at 1–66 (MASTRVLASR…TTRQAFQKRA (66 aa)) directs the protein to the mitochondrion. The next 2 membrane-spanning stretches (helical) occupy residues 86 to 106 (SAAI…AALL) and 123 to 143 (AILG…VALM).

Belongs to the ATPase C chain family. In terms of assembly, F-type ATPases have 2 components, CF(1) - the catalytic core - and CF(0) - the membrane proton channel. CF(1) has five subunits: alpha(3), beta(3), gamma(1), delta(1), epsilon(1). CF(0) has three main subunits: a, b and c.

The protein resides in the mitochondrion membrane. Mitochondrial membrane ATP synthase (F(1)F(0) ATP synthase or Complex V) produces ATP from ADP in the presence of a proton gradient across the membrane which is generated by electron transport complexes of the respiratory chain. F-type ATPases consist of two structural domains, F(1) - containing the extramembraneous catalytic core and F(0) - containing the membrane proton channel, linked together by a central stalk and a peripheral stalk. During catalysis, ATP synthesis in the catalytic domain of F(1) is coupled via a rotary mechanism of the central stalk subunits to proton translocation. Part of the complex F(0) domain. A homomeric c-ring of probably 10 subunits is part of the complex rotary element. The sequence is that of ATP synthase subunit 9, mitochondrial (oli) from Neurospora crassa (strain ATCC 24698 / 74-OR23-1A / CBS 708.71 / DSM 1257 / FGSC 987).